The sequence spans 427 residues: MEGMERPISEAYFQEAKRHIPGGVSSPVRAFKAVGGTPPFLVRGEGAYVWDADGNRYLDYVMSWGPLILGHAHPKVLARVRETLERGLTFGAPSPLEVALAKKVKRAYPFVDLVRFVNSGTEATMSALRLARGYTNRPYIVKFRGNYHGHADGLLVEAGSGALTLGVPSSAGVPEEYAKLTLVLEYNDPEGLREVLRRRGEEIAAIIFEPVVGNAGVLVPTEDFLKALHEAREFGVLLIADEVMTGFRLAFGGATELLGLKPDLVTLGKVLGGGLPAAAYAGRREIMEKVAPLGPVYQAGTLSGNPLAMAAGLATLELLEENPGYYRYLEDLGARLERGLKEVLAQKGIPHAVNRVGSMVTVFFTEGPVVTFQDAKRTDTELFKRFFHGLLDRGIYWPPSNFEAAFLSVAHTEEDVEKTLEALGEAL.

At K269 the chain carries N6-(pyridoxal phosphate)lysine.

This sequence belongs to the class-III pyridoxal-phosphate-dependent aminotransferase family. HemL subfamily. Homodimer. Pyridoxal 5'-phosphate is required as a cofactor.

Its subcellular location is the cytoplasm. It carries out the reaction (S)-4-amino-5-oxopentanoate = 5-aminolevulinate. The protein operates within porphyrin-containing compound metabolism; protoporphyrin-IX biosynthesis; 5-aminolevulinate from L-glutamyl-tRNA(Glu): step 2/2. The polypeptide is Glutamate-1-semialdehyde 2,1-aminomutase (Thermus thermophilus (strain ATCC BAA-163 / DSM 7039 / HB27)).